The sequence spans 549 residues: Oxygen-dependent choline dehydrogenase (549 aa).

4–33 lines the FAD pocket; that stretch reads DFVIIGSGSAGSALAYRLSEDGRNSVIVLE. Residue H465 is the Proton acceptor of the active site.

Belongs to the GMC oxidoreductase family. The cofactor is FAD.

The protein resides in the cell membrane. It carries out the reaction choline + A = betaine aldehyde + AH2. The enzyme catalyses betaine aldehyde + NAD(+) + H2O = glycine betaine + NADH + 2 H(+). Its pathway is amine and polyamine biosynthesis; betaine biosynthesis via choline pathway; betaine aldehyde from choline (cytochrome c reductase route): step 1/1. In terms of biological role, involved in the biosynthesis of the osmoprotectant glycine betaine. Catalyzes the oxidation of choline to betaine aldehyde and betaine aldehyde to glycine betaine at the same rate. The sequence is that of Oxygen-dependent choline dehydrogenase from Rhizobium meliloti (strain 1021) (Ensifer meliloti).